The chain runs to 92 residues: MSELEKAMVALIDVFHQYSGREGDKHKLKKSELKELINNELSHFLEEIKEQEVVDKVMETLDEDGDGECDFQEFMAFVSMVTTACHEFFEHE.

N-acetylserine is present on Ser-2. EF-hand domains lie at 13–48 (DVFH…LEEI) and 49–84 (KEQE…VTTA). His-16 is a binding site for Zn(2+). The Ca(2+) site is built by Ser-19 and Glu-22. Residue His-26 coordinates Zn(2+). Ca(2+)-binding residues include Lys-27, Glu-32, Asp-62, Asp-64, Asp-66, Glu-68, and Glu-73. Zn(2+) contacts are provided by His-86 and His-91.

This sequence belongs to the S-100 family. In terms of assembly, dimer of either two alpha chains, or two beta chains, or one alpha and one beta chain. The S100B dimer binds two molecules of STK38. Interacts with CACYBP in a calcium-dependent manner. Interacts with ATAD3A; this interaction probably occurs in the cytosol prior to ATAD3A mitochondrial targeting. Interacts with S100A6. The S100B dimer interacts with two molecules of CAPZA1. Interacts with AGER. Interacts with PPP5C (via TPR repeats); the interaction is calcium-dependent and modulates PPP5C activity. Interacts with TPPP; this interaction inhibits TPPP dimerization. Interacts with isoform CLSTN3beta of CLSTN3; interaction promotes secretion. In terms of tissue distribution, although predominant among the water-soluble brain proteins, S100 is also found in a variety of other tissues.

The protein localises to the cytoplasm. The protein resides in the nucleus. It is found in the secreted. Functionally, small zinc- and- and calcium-binding protein that is highly expressed in astrocytes and constitutes one of the most abundant soluble proteins in brain. Weakly binds calcium but binds zinc very tightly-distinct binding sites with different affinities exist for both ions on each monomer. Physiological concentrations of potassium ion antagonize the binding of both divalent cations, especially affecting high-affinity calcium-binding sites. Acts as a neurotrophic factor that promotes astrocytosis and axonal proliferation. Involved in innervation of thermogenic adipose tissue by acting as an adipocyte-derived neurotrophic factor that promotes sympathetic innervation of adipose tissue. Binds to and initiates the activation of STK38 by releasing autoinhibitory intramolecular interactions within the kinase. Interaction with AGER after myocardial infarction may play a role in myocyte apoptosis by activating ERK1/2 and p53/TP53 signaling. Could assist ATAD3A cytoplasmic processing, preventing aggregation and favoring mitochondrial localization. May mediate calcium-dependent regulation on many physiological processes by interacting with other proteins, such as TPR-containing proteins, and modulating their activity. In Rattus norvegicus (Rat), this protein is Protein S100-B.